The primary structure comprises 263 residues: Type II restriction enzyme TthHB8I (263 aa).

The enzyme catalyses Endonucleolytic cleavage of DNA to give specific double-stranded fragments with terminal 5'-phosphates.. Functionally, a P subtype restriction enzyme that recognizes the double-stranded sequence 5'-TCGA-3' and cleaves after T-1. The protein is Type II restriction enzyme TthHB8I (tthHB8IR) of Thermus thermophilus (strain ATCC 27634 / DSM 579 / HB8).